The sequence spans 349 residues: Protein Wnt-7a (349 aa).

Residues 1 to 31 (MNRKARRCLGHLFLSLGMVYLRIGGFSSVVA) form the signal peptide. Cystine bridges form between Cys-73-Cys-84, Cys-123-Cys-131, Cys-133-Cys-152, Cys-200-Cys-214, and Cys-202-Cys-209. N-linked (GlcNAc...) asparagine glycosylation is found at Asn-83 and Asn-127. Ser-206 carries the O-palmitoleoyl serine; by PORCN lipid modification. Residues 238-266 (VEPVRASRNKRPTFLKIKKPLSYRKPMDT) form a disordered linker region. 6 disulfides stabilise this stretch: Cys-278–Cys-309, Cys-294–Cys-304, Cys-308–Cys-348, Cys-324–Cys-339, Cys-326–Cys-336, and Cys-331–Cys-332. N-linked (GlcNAc...) asparagine glycosylation occurs at Asn-295.

Belongs to the Wnt family. In terms of assembly, forms a soluble 1:1 complex with AFM; this prevents oligomerization and is required for prolonged biological activity. The complex with AFM may represent the physiological form in body fluids. Interacts with PORCN. Interacts (via intrinsically disordered linker region) with RECK; interaction with RECK confers ligand selectivity for Wnt7 in brain endothelial cells and allows these cells to selectively respond to Wnt7. Interacts with FZD5. Post-translationally, palmitoleoylation is required for efficient binding to frizzled receptors. Depalmitoleoylation leads to Wnt signaling pathway inhibition.

It is found in the secreted. The protein resides in the extracellular space. Its subcellular location is the extracellular matrix. Its function is as follows. Ligand for members of the frizzled family of seven transmembrane receptors that functions in the canonical Wnt/beta-catenin signaling pathway. Plays an important role in embryonic development, including dorsal versus ventral patterning during limb development, skeleton development and urogenital tract development. Required for central nervous system (CNS) angiogenesis and blood-brain barrier regulation. Required for normal, sexually dimorphic development of the Mullerian ducts, and for normal fertility in both sexes. Required for normal neural stem cell proliferation in the hippocampus dentate gyrus. Required for normal progress through the cell cycle in neural progenitor cells, for self-renewal of neural stem cells, and for normal neuronal differentiation and maturation. Promotes formation of synapses via its interaction with FZD5. This is Protein Wnt-7a (WNT7A) from Pongo pygmaeus (Bornean orangutan).